We begin with the raw amino-acid sequence, 504 residues long: O-fucosyltransferase 39 (504 aa).

Residues 11-27 (WILSMFFFVVLFCNNVS) form a helical; Signal-anchor for type II membrane protein membrane-spanning segment. Asn-115 is a glycosylation site (N-linked (GlcNAc...) asparagine). Residue 288 to 290 (HLR) participates in substrate binding. Residues Asn-359 and Asn-460 are each glycosylated (N-linked (GlcNAc...) asparagine).

The protein belongs to the glycosyltransferase GT106 family.

The protein localises to the membrane. Its pathway is glycan metabolism. This is O-fucosyltransferase 39 from Arabidopsis thaliana (Mouse-ear cress).